The primary structure comprises 87 residues: MKFQPLGKRVLIEREEESNKTASGIIIPDNASKEKPSTGKIVEVGTECDCVKAGDKVAFAKYSGSELTLGDKKYLILNLEDVLGIIK.

This sequence belongs to the GroES chaperonin family. Heptamer of 7 subunits arranged in a ring. Interacts with the chaperonin GroEL.

The protein localises to the cytoplasm. In terms of biological role, together with the chaperonin GroEL, plays an essential role in assisting protein folding. The GroEL-GroES system forms a nano-cage that allows encapsulation of the non-native substrate proteins and provides a physical environment optimized to promote and accelerate protein folding. GroES binds to the apical surface of the GroEL ring, thereby capping the opening of the GroEL channel. The protein is Co-chaperonin GroES of Campylobacter hominis (strain ATCC BAA-381 / DSM 21671 / CCUG 45161 / LMG 19568 / NCTC 13146 / CH001A).